The sequence spans 98 residues: Small ribosomal subunit protein eS24 (98 aa).

It belongs to the eukaryotic ribosomal protein eS24 family.

The sequence is that of Small ribosomal subunit protein eS24 from Thermococcus gammatolerans (strain DSM 15229 / JCM 11827 / EJ3).